Reading from the N-terminus, the 473-residue chain is MASKTYTAGVKDYRETYWEPDYKIKDSDLLAVFKVTPQPGVDREEAAAAVAAESSTGTWTTVWTDLLTDLEHYKGRAYKVEDVPGDDEAFYAFIAYPIDLFEEGSIVNVFTSLVGNVFGFKAVRALRLEDVRFPLHFVMTCPGPPNGIQVERDKMNKYGRPLLGCTIKPKLGLSAKNYGRAVYECLRGGLDFTKDDENVNSQPFMRWRDRFEFVMEAIQKAEEETGERKGHYLNVTAPTPEEMYKRAEFAKELGAPIIMHDYITAGFCAHQGLANWCRDNGMLLHIHRAMHAVLDRNPNHGIHFRVLTKILRLMGGDQLHTGTVVGKLEGDRQSTLGWIDLLRKPYIEEDRSRGLFFDQDWGAMPGAFAVASGGIHVWHMPALLSIFGDDAVFQFGGGTLGHPWGNAAGAAANRVALEACVKARNEGRELEKEGKEILTEAAKSSPELKAAMETWKEIKFEFDTVDKLDTAHR.

Substrate-binding residues include Asn-116 and Thr-166. The active-site Proton acceptor is the Lys-168. Lys-170 is a binding site for substrate. Residues Lys-194, Asp-196, and Glu-197 each contribute to the Mg(2+) site. Lys-194 carries the N6-carboxylysine modification. His-287 serves as the catalytic Proton acceptor. 3 residues coordinate substrate: Arg-288, His-320, and Ser-372.

This sequence belongs to the RuBisCO large chain family. Type I subfamily. As to quaternary structure, heterohexadecamer of 8 large chains and 8 small chains. It depends on Mg(2+) as a cofactor.

It carries out the reaction 2 (2R)-3-phosphoglycerate + 2 H(+) = D-ribulose 1,5-bisphosphate + CO2 + H2O. The catalysed reaction is D-ribulose 1,5-bisphosphate + O2 = 2-phosphoglycolate + (2R)-3-phosphoglycerate + 2 H(+). Functionally, ruBisCO catalyzes two reactions: the carboxylation of D-ribulose 1,5-bisphosphate, the primary event in carbon dioxide fixation, as well as the oxidative fragmentation of the pentose substrate. Both reactions occur simultaneously and in competition at the same active site. In Halorhodospira halophila (strain DSM 244 / SL1) (Ectothiorhodospira halophila (strain DSM 244 / SL1)), this protein is Ribulose bisphosphate carboxylase large chain.